We begin with the raw amino-acid sequence, 317 residues long: Ribosomal protein L11 methyltransferase (317 aa).

The S-adenosyl-L-methionine site is built by Thr-139, Gly-162, Asp-184, and Asn-226. Positions Glu-274–Gly-297 are disordered.

Belongs to the methyltransferase superfamily. PrmA family.

It is found in the cytoplasm. It carries out the reaction L-lysyl-[protein] + 3 S-adenosyl-L-methionine = N(6),N(6),N(6)-trimethyl-L-lysyl-[protein] + 3 S-adenosyl-L-homocysteine + 3 H(+). Its function is as follows. Methylates ribosomal protein L11. This Sorangium cellulosum (strain So ce56) (Polyangium cellulosum (strain So ce56)) protein is Ribosomal protein L11 methyltransferase.